Consider the following 449-residue polypeptide: tRNA(Ile)-lysidine synthase (449 aa).

ATP is bound at residue 35–40 (SGGIDS).

Belongs to the tRNA(Ile)-lysidine synthase family.

The protein localises to the cytoplasm. It carries out the reaction cytidine(34) in tRNA(Ile2) + L-lysine + ATP = lysidine(34) in tRNA(Ile2) + AMP + diphosphate + H(+). In terms of biological role, ligates lysine onto the cytidine present at position 34 of the AUA codon-specific tRNA(Ile) that contains the anticodon CAU, in an ATP-dependent manner. Cytidine is converted to lysidine, thus changing the amino acid specificity of the tRNA from methionine to isoleucine. The polypeptide is tRNA(Ile)-lysidine synthase (Coxiella burnetii (strain RSA 493 / Nine Mile phase I)).